Reading from the N-terminus, the 153-residue chain is Arachidonate 5-lipoxygenase-activating protein (153 aa).

Residues 1–8 lie on the Lumenal side of the membrane; the sequence is MDQETVGN. A helical transmembrane segment spans residues 9 to 30; the sequence is IVLLAIVTLISVVQNGFFAHKV. Residues 31–52 are Cytoplasmic-facing; sequence EHESKTHNGRSFQRTGPLAFER. The helical transmembrane segment at 53 to 77 threads the bilayer; it reads VYTANQNCVDAYPTFLVMLWSAGLL. The Lumenal portion of the chain corresponds to 78–80; sequence CSQ. A helical transmembrane segment spans residues 81–102; it reads VPAAFAGLMYLFVRQKYFVGYL. Residues 103-107 are Cytoplasmic-facing; that stretch reads GERTQ. The stretch at 108–115 is an intramembrane region; the sequence is STPGYIFG. Residues 116–128 traverse the membrane as a helical segment; it reads KRIILFLFAMSLA. Residues 129–153 lie on the Lumenal side of the membrane; that stretch reads GILNYFLIAFFGSDFENYIKTVTTT.

Belongs to the MAPEG family. As to quaternary structure, homotrimer. Interacts with LTC4S and ALOX5.

The protein localises to the nucleus membrane. It is found in the endoplasmic reticulum membrane. Required for leukotriene biosynthesis by ALOX5 (5-lipoxygenase). Anchors ALOX5 to the membrane. Binds arachidonic acid, and could play an essential role in the transfer of arachidonic acid to ALOX5. Binds to MK-886, a compound that blocks the biosynthesis of leukotrienes. This chain is Arachidonate 5-lipoxygenase-activating protein (ALOX5AP), found in Ovis aries (Sheep).